The chain runs to 283 residues: Bifunctional protein FolD (283 aa).

Residues 166-168 and serine 191 contribute to the NADP(+) site; that span reads GRS.

The protein belongs to the tetrahydrofolate dehydrogenase/cyclohydrolase family. In terms of assembly, homodimer.

It carries out the reaction (6R)-5,10-methylene-5,6,7,8-tetrahydrofolate + NADP(+) = (6R)-5,10-methenyltetrahydrofolate + NADPH. The catalysed reaction is (6R)-5,10-methenyltetrahydrofolate + H2O = (6R)-10-formyltetrahydrofolate + H(+). It functions in the pathway one-carbon metabolism; tetrahydrofolate interconversion. In terms of biological role, catalyzes the oxidation of 5,10-methylenetetrahydrofolate to 5,10-methenyltetrahydrofolate and then the hydrolysis of 5,10-methenyltetrahydrofolate to 10-formyltetrahydrofolate. This is Bifunctional protein FolD from Pediococcus pentosaceus (strain ATCC 25745 / CCUG 21536 / LMG 10740 / 183-1w).